The chain runs to 717 residues: uncharacterized protein (717 aa).

Belongs to the asfivirus C717R family.

Its subcellular location is the virion. This is an uncharacterized protein from Ornithodoros (relapsing fever ticks).